A 173-amino-acid chain; its full sequence is Inorganic pyrophosphatase (173 aa).

3 residues coordinate substrate: Lys-28, Arg-42, and Tyr-54. 3 residues coordinate Mg(2+): Asp-64, Asp-69, and Asp-101. Tyr-140 is a binding site for substrate.

This sequence belongs to the PPase family. Homohexamer. It depends on Mg(2+) as a cofactor.

The protein resides in the cytoplasm. The enzyme catalyses diphosphate + H2O = 2 phosphate + H(+). In terms of biological role, catalyzes the hydrolysis of inorganic pyrophosphate (PPi) forming two phosphate ions. In Helicobacter pylori (strain J99 / ATCC 700824) (Campylobacter pylori J99), this protein is Inorganic pyrophosphatase.